We begin with the raw amino-acid sequence, 294 residues long: Decaprenyl-diphosphate synthase subunit 2 (294 aa).

It belongs to the FPP/GGPP synthase family. In terms of assembly, heterotetramer of 2 dps1 and 2 dlp1 subunits.

Its subcellular location is the mitochondrion. It carries out the reaction 7 isopentenyl diphosphate + (2E,6E)-farnesyl diphosphate = all-trans-decaprenyl diphosphate + 7 diphosphate. It participates in cofactor biosynthesis; ubiquinone biosynthesis. Its function is as follows. Supplies decaprenyl diphosphate, the precursor for the side chain of the isoprenoid quinones ubiquinone-10. The protein is Decaprenyl-diphosphate synthase subunit 2 (dlp1) of Schizosaccharomyces pombe (strain 972 / ATCC 24843) (Fission yeast).